A 1820-amino-acid polypeptide reads, in one-letter code: Histone-lysine N-methyltransferase, H3 lysine-9 specific (1820 aa).

Disordered stretches follow at residues 1–54 (MPGA…TSMR), 74–251 (NLLP…TPVT), 284–618 (SLSD…APTK), 634–681 (SSER…KKAV), 804–836 (NVDDQDSAQPQNQTPLPSAISVSSKKNHGSLSK), 850–893 (SSTL…VNSW), 911–944 (HAKKKWKERERGKEREKEKVREKEKAEEENEQLR), 966–996 (DVESRTRSIPRADGETRKRPPSPGISVSTDA), 1063–1126 (PLSV…NGAV), 1183–1270 (RYAV…DRTA), 1296–1335 (KASAVSPVPSANRPSPAPSAKADLLPQKRKRRLKKITSQQ), and 1385–1407 (RSEPRTKREPIEEDNNEYFTDSD). Positions 11–31 (VDNPLVLDSSDSDDNLSGLPL) are enriched in low complexity. A compositionally biased stretch (polar residues) spans 109 to 129 (ADSSSPPENQNVISFLGNHSQ). Residues 152 to 169 (GGENIAGQNNEANAAQAA) show a composition bias toward low complexity. 2 stretches are compositionally biased toward polar residues: residues 174–204 (GTPSLTLSSNRPQSVSGAQLVVASSSRSAIN) and 212–222 (SIPQQSPSSRA). Low complexity-rich tracts occupy residues 226-236 (RSASIASSRSR), 284-311 (SLSDPTILSPPSATSAPPNSPIPSTSTT), and 339-352 (TPATTSPAGPGPSA). A compositionally biased stretch (basic and acidic residues) spans 361 to 370 (KSSDQKESPR). A compositionally biased stretch (polar residues) spans 374-385 (SKQPSSPSSTHG). Residues 400–424 (SATSGKSSAASSRSKSRAPLSSRAA) are compositionally biased toward low complexity. Residues 433 to 442 (SKTTSVSSTH) are compositionally biased toward polar residues. The span at 443 to 459 (PPSRASPSSLPSQSQRQ) shows a compositional bias: low complexity. Positions 479–510 (TLSSGTGQSTPSKFSLPTSDVASNQKNKSTGL) are enriched in polar residues. 3 stretches are compositionally biased toward low complexity: residues 514–531 (PKKPSSTPTSSIPQRTST), 551–563 (QSSSEASRSIQTS), and 594–618 (TKATTLFHTTSSPPSPSQSTSAPTK). Polar residues-rich tracts occupy residues 643 to 662 (GKSQTSDSVVAPAASQTAAS) and 810 to 827 (SAQPQNQTPLPSAISVSS). Low complexity predominate over residues 850-861 (SSTLGDSVSGLG). The span at 869–893 (TQSMPQSPLPTTNTNNSSGIEVNSW) shows a compositional bias: polar residues. Composition is skewed to basic and acidic residues over residues 917-944 (KERERGKEREKEKVREKEKAEEENEQLR) and 966-983 (DVESRTRSIPRADGETRK). Positions 1076-1089 (SSSSTSTPSLLSRS) are enriched in low complexity. Over residues 1296-1320 (KASAVSPVPSANRPSPAPSAKADLL) the composition is skewed to low complexity. The region spanning 1516–1585 (LGCDCDGPCD…ECMNRVIQRG (70 aa)) is the Pre-SET domain. Zn(2+) is bound by residues C1518, C1520, C1524, C1531, C1533, C1567, C1571, C1573, and C1577. The SET domain occupies 1590-1750 (TGIEIFKTKE…KHEELCISYK (161 aa)). Residues 1600 to 1602 (KGW), Y1643, R1704, and 1707 to 1708 (NH) contribute to the S-adenosyl-L-methionine site. C1710 is a Zn(2+) binding site. Positions 1756-1794 (DDIPSPEPVKKKKGGKGKKQMSKTSASAHPPEMTALNSD) are disordered. The span at 1765–1776 (KKKKGGKGKKQM) shows a compositional bias: basic residues. One can recognise a Post-SET domain in the interval 1800–1816 (VKDICRCGAKNCDGRMF). Zn(2+) contacts are provided by C1804, C1806, and C1811.

Belongs to the class V-like SAM-binding methyltransferase superfamily. Histone-lysine methyltransferase family. Suvar3-9 subfamily.

It localises to the nucleus. The protein resides in the chromosome. It catalyses the reaction N(6)-methyl-L-lysyl(9)-[histone H3] + S-adenosyl-L-methionine = N(6),N(6)-dimethyl-L-lysyl(9)-[histone H3] + S-adenosyl-L-homocysteine + H(+). The enzyme catalyses L-lysyl(9)-[histone H3] + S-adenosyl-L-methionine = N(6)-methyl-L-lysyl(9)-[histone H3] + S-adenosyl-L-homocysteine + H(+). Its function is as follows. Histone methyltransferase that specifically dimethylates histone H3 to form H3K9me2. H3K9me2 represents a specific tag for epigenetic transcriptional repression by recruiting HP1 proteins to methylated histones. Mainly functions in heterochromatin regions, thereby playing a central role in the establishment of constitutive heterochromatin at centromeric regions. This is Histone-lysine N-methyltransferase, H3 lysine-9 specific from Cryptococcus neoformans var. grubii serotype A (strain H99 / ATCC 208821 / CBS 10515 / FGSC 9487) (Filobasidiella neoformans var. grubii).